The chain runs to 546 residues: 5'-nucleotidase domain-containing protein 3 (546 aa).

The Nucleophile role is filled by aspartate 100. Positions 100 and 102 each coordinate Mg(2+). Aspartate 102 acts as the Proton donor in catalysis. Lysine 249–isoleucine 257 contributes to the substrate binding site. Aspartate 387 provides a ligand contact to Mg(2+).

The protein belongs to the 5'(3')-deoxyribonucleotidase family. It depends on Mg(2+) as a cofactor.

This is 5'-nucleotidase domain-containing protein 3 (Nt5dc3) from Mus musculus (Mouse).